Reading from the N-terminus, the 1253-residue chain is Myosin-1 (1253 aa).

The disordered stretch occupies residues 1 to 40; it reads MGHSRRPVGGEKKSRGFGRSKAAADVGDGRQAGKPQVKKA. Positions 50 to 729 constitute a Myosin motor domain; the sequence is IGVSDLTLLS…TLFALEAMRD (680 aa). 143–150 lines the ATP pocket; the sequence is GESGAGKT. S371 is subject to Phosphoserine. Positions 418–500 are actin-binding; sequence SIGILDIYGF…PGVFAALNDA (83 aa). 2 consecutive IQ domains span residues 733 to 753 and 754 to 779; these read HNMAIRIQRAWRNYLRYRIEC and ATRIQRFWRRTTGGLEFIKLRDQGHQ. Residues 787 to 977 enclose the TH1 domain; sequence RRRMSLLGSR…TIHTGAGEPA (191 aa). Disordered regions lie at residues 959-1083 and 1139-1253; these read TGDD…PKKP and QVAP…DDDW. The segment covering 1029 to 1055 has biased composition (low complexity); sequence PQPAAAQPAAPQPAARVVPQPVAAVAA. Pro residues-rich tracts occupy residues 1068 to 1081 and 1143 to 1155; these read APPPPPPAAAPAPK and APKPTPPPPPPAA. Residues 1080 to 1141 form the SH3 domain; it reads PKKPTAKALY…PEAYLEEQVA (62 aa). Low complexity-rich tracts occupy residues 1156–1173 and 1221–1235; these read PRSTPTPVNGAAAAAKAK and NSASNASLAGGLAEA.

The protein belongs to the TRAFAC class myosin-kinesin ATPase superfamily. Myosin family. Post-translationally, phosphorylation of the TEDS site (Ser-371) is required for the polarization of the actin cytoskeleton. Phosphorylation probably activates the myosin-I ATPase activity.

It is found in the cytoplasm. The protein resides in the cytoskeleton. The protein localises to the actin patch. Type-I myosin implicated in the organization of the actin cytoskeleton. Required for proper actin cytoskeleton polarization. At the cell cortex, assembles in patch-like structures together with proteins from the actin-polymerizing machinery and promotes actin assembly. Functions as actin nucleation-promoting factor (NPF) for the Arp2/3 complex. Plays an important role in polarized growth, spore germination, hyphal morphogenesis, and septal wall formation. The protein is Myosin-1 (myoA) of Aspergillus clavatus (strain ATCC 1007 / CBS 513.65 / DSM 816 / NCTC 3887 / NRRL 1 / QM 1276 / 107).